A 91-amino-acid chain; its full sequence is Potassium channel toxin MeuTXK-beta-2 (91 aa).

Positions 1–19 are cleaved as a signal peptide; it reads MQRNLVVLLFLGMVALSSC. Positions 54-91 constitute a BetaSPN-type CS-alpha/beta domain; the sequence is QFGCSAYQGYCDDHCQDIEKKEGFCHGFKCKCGIPMGF. 3 cysteine pairs are disulfide-bonded: Cys-57/Cys-78, Cys-64/Cys-83, and Cys-68/Cys-85.

The protein belongs to the long chain scorpion toxin family. Class 1 subfamily. As to expression, expressed by the venom gland.

It is found in the secreted. Functionally, has a low affinity binding to potassium channels of rat brain synaptosomes. Displays weak antibacterial activity against Stenotrophomonas sp. Strongly inhibits the development of the Plasmodium berghei ookinetes. Displays slight hemolytic effect on mouse erythrocytes. Induces cytolysis on Xenopus oocytes at high concentrations. Is not toxic towards mice and towards the insect Tenebrio molitor. This chain is Potassium channel toxin MeuTXK-beta-2, found in Mesobuthus eupeus (Lesser Asian scorpion).